A 624-amino-acid chain; its full sequence is Chaperone protein HtpG (624 aa).

The tract at residues 1–336 (MNMKGQETRG…SNDLPLNVSR (336 aa)) is a; substrate-binding. The interval 337–552 (EILQDSRITQ…ADEMSTQMAK (216 aa)) is b. The tract at residues 553-624 (LFAAAGQQAP…IRRMNQLLTA (72 aa)) is c.

The protein belongs to the heat shock protein 90 family. In terms of assembly, homodimer.

It localises to the cytoplasm. Its function is as follows. Molecular chaperone. Has ATPase activity. In Yersinia pestis bv. Antiqua (strain Antiqua), this protein is Chaperone protein HtpG.